The primary structure comprises 252 residues: Sugar fermentation stimulation protein homolog (252 aa).

Belongs to the SfsA family.

This is Sugar fermentation stimulation protein homolog from Picosynechococcus sp. (strain ATCC 27264 / PCC 7002 / PR-6) (Agmenellum quadruplicatum).